The primary structure comprises 114 residues: U17-barytoxin-Tl1a (114 aa).

Residues methionine 1–alanine 20 form the signal peptide. The propeptide occupies asparagine 21 to arginine 74. Disulfide bonds link cysteine 75/cysteine 88, cysteine 82/cysteine 93, and cysteine 87/cysteine 108.

Belongs to the neurotoxin 14 (magi-1) family. 03 (ICK-30-40) subfamily. In terms of tissue distribution, expressed by the venom gland.

The protein localises to the secreted. In terms of biological role, ion channel inhibitor. The polypeptide is U17-barytoxin-Tl1a (Trittame loki (Brush-footed trapdoor spider)).